The chain runs to 336 residues: S-adenosylmethionine:tRNA ribosyltransferase-isomerase (336 aa).

This sequence belongs to the QueA family. Monomer.

It localises to the cytoplasm. It carries out the reaction 7-aminomethyl-7-carbaguanosine(34) in tRNA + S-adenosyl-L-methionine = epoxyqueuosine(34) in tRNA + adenine + L-methionine + 2 H(+). The protein operates within tRNA modification; tRNA-queuosine biosynthesis. Transfers and isomerizes the ribose moiety from AdoMet to the 7-aminomethyl group of 7-deazaguanine (preQ1-tRNA) to give epoxyqueuosine (oQ-tRNA). The protein is S-adenosylmethionine:tRNA ribosyltransferase-isomerase of Sulfurihydrogenibium sp. (strain YO3AOP1).